The primary structure comprises 319 residues: Ribonuclease Z (319 aa).

7 residues coordinate Zn(2+): His-62, His-64, Asp-66, His-67, His-145, Asp-215, and His-273. Asp-66 acts as the Proton acceptor in catalysis.

It belongs to the RNase Z family. As to quaternary structure, homodimer. Zn(2+) is required as a cofactor.

It carries out the reaction Endonucleolytic cleavage of RNA, removing extra 3' nucleotides from tRNA precursor, generating 3' termini of tRNAs. A 3'-hydroxy group is left at the tRNA terminus and a 5'-phosphoryl group is left at the trailer molecule.. Functionally, zinc phosphodiesterase, which displays some tRNA 3'-processing endonuclease activity. Probably involved in tRNA maturation, by removing a 3'-trailer from precursor tRNA. The protein is Ribonuclease Z of Borreliella burgdorferi (strain ATCC 35210 / DSM 4680 / CIP 102532 / B31) (Borrelia burgdorferi).